The primary structure comprises 101 residues: Signal recognition particle 19 kDa protein (101 aa).

Belongs to the SRP19 family. In terms of assembly, part of the signal recognition particle protein translocation system, which is composed of SRP and FtsY. Archaeal SRP consists of a 7S RNA molecule of 300 nucleotides and two protein subunits: SRP54 and SRP19.

It is found in the cytoplasm. Involved in targeting and insertion of nascent membrane proteins into the cytoplasmic membrane. Binds directly to 7S RNA and mediates binding of the 54 kDa subunit of the SRP. The protein is Signal recognition particle 19 kDa protein of Methanosarcina barkeri (strain Fusaro / DSM 804).